The primary structure comprises 182 residues: UPF0397 protein BCA_2731 (182 aa).

The next 5 helical transmembrane spans lie at 9 to 29, 40 to 60, 71 to 91, 114 to 134, and 142 to 162; these read VVAI…GFSI, AILT…IGLI, WGIW…MGLI, ITGL…DIIV, and IVIQ…VLGL.

It belongs to the UPF0397 family.

The protein localises to the cell membrane. This is UPF0397 protein BCA_2731 from Bacillus cereus (strain 03BB102).